The following is a 206-amino-acid chain: Large ribosomal subunit protein eL13z (206 aa).

Residues 185-206 form a disordered region; the sequence is TNKRHAGARAKRAAEAEKEEKK. Positions 186-195 are enriched in basic residues; sequence NKRHAGARAK. Residues 196–206 are compositionally biased toward basic and acidic residues; sequence RAAEAEKEEKK.

This sequence belongs to the eukaryotic ribosomal protein eL13 family.

It localises to the cytoplasm. This is Large ribosomal subunit protein eL13z (RPL13B) from Arabidopsis thaliana (Mouse-ear cress).